A 436-amino-acid polypeptide reads, in one-letter code: 3-hydroxy-3-methylglutaryl-coenzyme A reductase (436 aa).

Active-site charge relay system residues include Glu-99, Lys-277, and Asp-293. His-390 acts as the Proton donor in catalysis.

Belongs to the HMG-CoA reductase family.

The catalysed reaction is (R)-mevalonate + 2 NADP(+) + CoA = (3S)-3-hydroxy-3-methylglutaryl-CoA + 2 NADPH + 2 H(+). Its pathway is metabolic intermediate biosynthesis; (R)-mevalonate biosynthesis; (R)-mevalonate from acetyl-CoA: step 3/3. Its function is as follows. Converts HMG-CoA to mevalonate. The sequence is that of 3-hydroxy-3-methylglutaryl-coenzyme A reductase (hmgA) from Archaeoglobus fulgidus (strain ATCC 49558 / DSM 4304 / JCM 9628 / NBRC 100126 / VC-16).